The primary structure comprises 251 residues: Capsid protein (251 aa).

Residues 1 to 27 (MPKRDLPWRSMPGTSKTSRNANYSPRA) are disordered. Residues 3–20 (KRDLPWRSMPGTSKTSRN) carry the Bipartite nuclear localization signal motif. Positions 12–23 (PGTSKTSRNANY) are enriched in polar residues. Residues 35-49 (KASEWVHRPMYRKPR) carry the Nuclear localization signal motif. A zinc finger lies at 63–80 (CEGPCKVQSYEQRHDISH). Residues 96–117 (ITHRVGKRFCVKSVYILGKIWM) carry the Nuclear export signal motif. Residues 195–242 (KRFWKVNNHVVYNHQEAGKYENHTENALLLYMACTHASNPVYATLKIR) carry the Bipartite nuclear localization signal motif.

The protein belongs to the geminiviridae capsid protein family. In terms of assembly, homomultimer. Binds to single-stranded and double-stranded viral DNA. Interacts (via nuclear localization signals) with host importin alpha-1a.

The protein resides in the virion. It is found in the host nucleus. Encapsidates the viral DNA into characteristic twinned ('geminate') particles. Binds the genomic viral ssDNA and shuttles it into and out of the cell nucleus. The CP of bipartite geminiviruses is not required for cell-to-cell or systemic movement. The polypeptide is Capsid protein (Abutilon (Upland cotton)).